We begin with the raw amino-acid sequence, 390 residues long: Elongation factor Ts 2, mitochondrial (390 aa).

Residues 1-24 (MMIFSTAVLRLCATSRIGAVTKRA) constitute a mitochondrion transit peptide. The segment covering 30–40 (SSASSSSSSSS) has biased composition (low complexity). The segment at 30–54 (SSASSSSSSSSPTQSMPPQRYTHHQ) is disordered.

This sequence belongs to the EF-Ts family.

It localises to the mitochondrion. Functionally, associates with the EF-Tu.GDP complex and induces the exchange of GDP to GTP. It remains bound to the aminoacyl-tRNA.EF-Tu.GTP complex up to the GTP hydrolysis stage on the ribosome. This is Elongation factor Ts 2, mitochondrial from Thalassiosira pseudonana (Marine diatom).